The sequence spans 1376 residues: DNA-directed RNA polymerase subunit beta'' (1376 aa).

4 residues coordinate Zn(2+): Cys220, Cys293, Cys300, and Cys303.

The protein belongs to the RNA polymerase beta' chain family. RpoC2 subfamily. In terms of assembly, in plastids the minimal PEP RNA polymerase catalytic core is composed of four subunits: alpha, beta, beta', and beta''. When a (nuclear-encoded) sigma factor is associated with the core the holoenzyme is formed, which can initiate transcription. It depends on Zn(2+) as a cofactor.

The protein localises to the plastid. It is found in the chloroplast. It carries out the reaction RNA(n) + a ribonucleoside 5'-triphosphate = RNA(n+1) + diphosphate. Functionally, DNA-dependent RNA polymerase catalyzes the transcription of DNA into RNA using the four ribonucleoside triphosphates as substrates. This is DNA-directed RNA polymerase subunit beta'' from Arabidopsis thaliana (Mouse-ear cress).